We begin with the raw amino-acid sequence, 1960 residues long: Myosin-9 (1960 aa).

Residue alanine 2 is modified to N-acetylalanine. Residues 2–838 (AQQAADKYLY…RLFTKVKPLL (837 aa)) are mediates interaction with LIMCH1. Lysine 8 is modified (N6-acetyllysine). Tyrosine 11 is subject to Phosphotyrosine. The 51-residue stretch at 27-77 (AAKKLVWVPSDKSGFEPASLKEEVGEEAIVELVENGKKVKVNKDDIQKMNP) folds into the Myosin N-terminal SH3-like domain. The Myosin motor domain occupies 81–776 (SKVEDMAELT…VLAHLEEERD (696 aa)). Residue lysine 102 is modified to N6-acetyllysine. 174–181 (GESGAGKT) serves as a coordination point for ATP. Residues lysine 299, lysine 435, and lysine 613 each carry the N6-acetyllysine modification. Serine 628 carries the phosphoserine modification. An actin-binding region spans residues 654–676 (LAKLMATLRNTNPNFVRCIIPNH). At tyrosine 754 the chain carries Phosphotyrosine. One can recognise an IQ domain in the interval 779 to 808 (ITDVIIGFQACCRGYLARKAFAKRQQQLTA). Residues 837 to 1926 (LLQVSRQEEE…LKNKLRRGDL (1090 aa)) adopt a coiled-coil conformation. Lysine 850 is modified (N6-succinyllysine). Lysine 860, lysine 975, and lysine 1024 each carry N6-acetyllysine. The span at 1035-1055 (RLRREEKQRQELEKTRRKLEG) shows a compositional bias: basic and acidic residues. The disordered stretch occupies residues 1035–1057 (RLRREEKQRQELEKTRRKLEGDS). A Phosphoserine modification is found at serine 1114. The segment at 1118-1137 (EDLESERASRNKAEKQKRDL) is disordered. Over residues 1122–1137 (SERASRNKAEKQKRDL) the composition is skewed to basic and acidic residues. Residues lysine 1234, lysine 1249, lysine 1357, lysine 1392, lysine 1404, lysine 1410, lysine 1459, and lysine 1638 each carry the N6-acetyllysine modification. Lysine 1669 is subject to N6-succinyllysine. A Phosphoserine modification is found at serine 1714. N6-acetyllysine is present on residues lysine 1793, lysine 1802, and lysine 1845. The interval 1877–1960 (RQLEEAEEEA…ADGAEAKPAE (84 aa)) is disordered. An Omega-N-methylarginine modification is found at arginine 1923. Serine 1943 bears the Phosphoserine mark. Positions 1948–1960 (DGKADGAEAKPAE) are enriched in basic and acidic residues.

It belongs to the TRAFAC class myosin-kinesin ATPase superfamily. Myosin family. Myosin is a hexameric protein that consists of 2 heavy chain subunits (MHC), 2 alkali light chain subunits (MLC) and 2 regulatory light chain subunits (MLC-2). Interacts with RASIP1. Interacts with DDR1. Interacts with PDLIM2. Interacts with SVIL. Interacts with HTRA3. Interacts with Myo7a. Interacts with CFAP95. Interacts with LIMCH1; independently of the integration of MYH9 into the myosin complex. Interacts with RAB3A. Interacts with ZBED4. Interacts with S100A4; this interaction increases cell motility. As to quaternary structure, (Microbial infection) Interacts with herpes simplex virus 1/HHV-1 envelope glycoprotein B. In terms of processing, ISGylated. Ubiquitination. In the kidney, expressed in the glomeruli. Also expressed in leukocytes.

The protein resides in the cytoplasm. It is found in the cytoskeleton. Its subcellular location is the cell cortex. The protein localises to the cytoplasmic vesicle. It localises to the secretory vesicle. The protein resides in the cortical granule. It is found in the cell membrane. Functionally, cellular myosin that appears to play a role in cytokinesis, cell shape, and specialized functions such as secretion and capping. Required for cortical actin clearance prior to oocyte exocytosis. Promotes cell motility in conjunction with S100A4. During cell spreading, plays an important role in cytoskeleton reorganization, focal contact formation (in the margins but not the central part of spreading cells), and lamellipodial retraction; this function is mechanically antagonized by MYH10. In terms of biological role, (Microbial infection) Acts as a receptor for herpes simplex virus 1/HHV-1 envelope glycoprotein B. The polypeptide is Myosin-9 (MYH9) (Homo sapiens (Human)).